We begin with the raw amino-acid sequence, 352 residues long: Very-long-chain 3-oxoacyl-CoA reductase (352 aa).

The chain crosses the membrane as a helical span at residues 20–40 (TLWFIFIFGLLKLVPFALRFL). NADP(+)-binding residues include V66, D120, N147, Y228, K232, V261, and S263. Y228 (proton donor) is an active-site residue. K232 acts as the Lowers pKa of active site Tyr in catalysis.

This sequence belongs to the short-chain dehydrogenases/reductases (SDR) family.

It localises to the endoplasmic reticulum membrane. The enzyme catalyses a very-long-chain (3R)-3-hydroxyacyl-CoA + NADP(+) = a very-long-chain 3-oxoacyl-CoA + NADPH + H(+). The protein operates within lipid metabolism; fatty acid biosynthesis. Functionally, component of the microsomal membrane bound fatty acid elongation system, which produces the 26-carbon very long-chain fatty acids (VLCFA) from palmitate. Catalyzes the reduction of the 3-ketoacyl-CoA intermediate that is formed in each cycle of fatty acid elongation. VLCFAs serve as precursors for ceramide and sphingolipids. This chain is Very-long-chain 3-oxoacyl-CoA reductase, found in Candida glabrata (strain ATCC 2001 / BCRC 20586 / JCM 3761 / NBRC 0622 / NRRL Y-65 / CBS 138) (Yeast).